Consider the following 281-residue polypeptide: CCAAT/enhancer-binding protein epsilon (281 aa).

The segment at 1–30 (MSHGTYYECEPRAGQQPLEFSGARAGPGEL) is disordered. Lys121 is covalently cross-linked (Glycyl lysine isopeptide (Lys-Gly) (interchain with G-Cter in SUMO2)). Position 181 is a phosphoserine (Ser181). In terms of domain architecture, bZIP spans 204-267 (SLEYRLRRER…DTLRNLFRQI (64 aa)). Positions 208–228 (RLRRERNNIAVRKSRDKAKRR) are basic motif. The leucine-zipper stretch occupies residues 230–237 (LETQQKVL).

The protein belongs to the bZIP family. C/EBP subfamily. Binds DNA as a homodimer and as a heterodimer. Can form stable heterodimers with CEBPA, CEBPB and CEBPD. Interacts with GATA1 and SPI1. Interacts with SMARCD2. In terms of processing, phosphorylated.

The protein resides in the nucleus. Its function is as follows. Transcriptional activator. C/EBP are DNA-binding proteins that recognize two different motifs: the CCAAT homology common to many promoters and the enhanced core homology common to many enhancers. Required for the promyelocyte-myelocyte transition in myeloid differentiation. This chain is CCAAT/enhancer-binding protein epsilon (CEBPE), found in Ovis aries (Sheep).